The following is a 1546-amino-acid chain: Lysophospholipase NTE1 (1546 aa).

Over 1–45 (MKDSTEALNSIAFAVDTTLSSILPSSLAPPSAPPATSSFLKSIWY) the chain is Cytoplasmic. Residues 46–66 (AFWWLWSMVVFKIMNIILLYI) form a helical membrane-spanning segment. Residues 67–81 (PSKIMNALSINFEIT) are Lumenal-facing. A helical membrane pass occupies residues 82–102 (LNLSSILVALSAIITVCFLVV). Residues 103 to 1546 (RYKYLTGYSK…KKVLYRRNSI (1444 aa)) are Cytoplasmic-facing. Residues 689–820 (PTEF…LKKL) and 816–965 (KLKK…VASK) each bind a nucleoside 3',5'-cyclic phosphate. The PNPLA domain maps to 1239–1403 (LVLGGGGSRG…LDNLPVSEMK (165 aa)). Positions 1243–1248 (GGGSRG) match the GXGXXG motif. The GXSXG signature appears at 1270–1274 (GTSIG). The active-site Nucleophile is the Ser-1272. The active-site Proton acceptor is Asp-1390. The short motif at 1390–1392 (DGG) is the DGA/G element.

Belongs to the NTE family.

The protein resides in the endoplasmic reticulum membrane. The enzyme catalyses a 1-acyl-sn-glycero-3-phosphocholine + H2O = sn-glycerol 3-phosphocholine + a fatty acid + H(+). Inhibited by organophosphorus esters. In terms of biological role, intracellular phospholipase B that catalyzes the double deacylation of phosphatidylcholine (PC) to glycerophosphocholine (GroPCho). Plays an important role in membrane lipid homeostasis. Responsible for the rapid PC turnover in response to inositol, elevated temperatures, or when choline is present in the growth medium. The protein is Lysophospholipase NTE1 (NTE1) of Scheffersomyces stipitis (strain ATCC 58785 / CBS 6054 / NBRC 10063 / NRRL Y-11545) (Yeast).